A 55-amino-acid chain; its full sequence is MASSTDVRPKITLACEVCKHRNYITKKNRRNDPDRLELKKFCPNCGTHRAHKESR.

This sequence belongs to the bacterial ribosomal protein bL33 family.

The sequence is that of Large ribosomal subunit protein bL33A from Mycobacterium sp. (strain KMS).